A 175-amino-acid chain; its full sequence is MAEQLYATLKTNRGDIEIRLLPNHAPKTVRNFVELATGQREWVNPETGEKSTDRLYDGTVFHRVISGFMIQGGDPLGNGTGGPGYKFADEFHPELGFTQPYLLAMANAGPGTNGSQFFLTVSPTAWLTGKHTIFGEVSGEAGRKVVDAIAATPTNPRTDRPLEDVVIESVVVETR.

One can recognise a PPIase cyclophilin-type domain in the interval 3-172 (EQLYATLKTN…EDVVIESVVV (170 aa)).

The protein belongs to the cyclophilin-type PPIase family.

Its subcellular location is the cytoplasm. The enzyme catalyses [protein]-peptidylproline (omega=180) = [protein]-peptidylproline (omega=0). Inhibited by cyclosporin A (CsA). In terms of biological role, PPIases accelerate the folding of proteins. It catalyzes the cis-trans isomerization of proline imidic peptide bonds in oligopeptides. The polypeptide is Peptidyl-prolyl cis-trans isomerase B (cypB) (Streptomyces anulatus (Streptomyces chrysomallus)).